We begin with the raw amino-acid sequence, 227 residues long: Cytidylate kinase (227 aa).

Residue 12 to 20 coordinates ATP; the sequence is GPSGAGKGT.

This sequence belongs to the cytidylate kinase family. Type 1 subfamily.

It localises to the cytoplasm. The enzyme catalyses CMP + ATP = CDP + ADP. It carries out the reaction dCMP + ATP = dCDP + ADP. This Xanthomonas euvesicatoria pv. vesicatoria (strain 85-10) (Xanthomonas campestris pv. vesicatoria) protein is Cytidylate kinase.